A 1011-amino-acid polypeptide reads, in one-letter code: E3 ubiquitin-protein ligase mib1 (1011 aa).

An MIB/HERC2 1 domain is found at 6-74 (NNRVMVEGVG…AYDLRIMDSA (69 aa)). The segment at 80–132 (HDGTMCDTCRQQPIIGIRWKCAECTNYDLCTVCYHGDKHHLRHRFYRITTPGS) adopts a ZZ-type zinc-finger fold. Residues Cys-85, Cys-88, Cys-100, Cys-103, Cys-109, Cys-112, His-118, and His-122 each contribute to the Zn(2+) site. In terms of domain architecture, MIB/HERC2 2 spans 143–221 (SKKITARGIF…MSDLKCVQDA (79 aa)). 9 ANK repeats span residues 430–460 (DLNEELVKAAANGDVAKVDDLLKRQDVDVNG), 463–492 (AGHTAMQAASQNGHVDILKLLLKHSVDVEA), 496–525 (DGDRAVHHAAFGDEGTVIEVLQRGGADLNA), 529–558 (RRQTPLHIAVNKGHLQVVKKLLDFSCHPSL), 562–591 (EGDTPLHDAISKKRDDILAVLLEAGADVTI), 595–627 (NGFNALHHAALRGNPSAMRVLLSKLPRPWIVDE), 631–661 (DGYTALHLAALNNHVEVAELLVHQGSANLDI), 665–694 (NQQTALHLAVERQHTQIVRLLVRAEAKLDI), and 698–729 (DGDTPLHEALRHHTLSQLRQLQDMQDVGKVDT). 2 RING-type zinc fingers span residues 820–855 (CMVCSDLKRDTLFGPCGHIATCSLCSPRVKKCLLCK) and 867–902 (CVVCSDKKAAVLFQPCGHMCACENCASLMKKCVQCR). Residues 936–963 (QKDKDNTNVNADVQKLQQQLQDIKEQTM) adopt a coiled-coil conformation. The RING-type 3 zinc finger occupies 964–997 (CPVCLDRLKNMIFMCGHGTCQLCGDRMSECPICR).

The protein resides in the cytoplasm. Its subcellular location is the cytoskeleton. It localises to the microtubule organizing center. It is found in the centrosome. The protein localises to the centriolar satellite. It carries out the reaction S-ubiquitinyl-[E2 ubiquitin-conjugating enzyme]-L-cysteine + [acceptor protein]-L-lysine = [E2 ubiquitin-conjugating enzyme]-L-cysteine + N(6)-ubiquitinyl-[acceptor protein]-L-lysine.. The protein operates within protein modification; protein ubiquitination. In terms of biological role, E3 ubiquitin-protein ligase that mediates ubiquitination of Delta receptors, which act as ligands of Notch proteins. Positively regulates the Delta-mediated Notch signaling by ubiquitinating the intracellular domain of Delta, leading to endocytosis of Delta receptors. The polypeptide is E3 ubiquitin-protein ligase mib1 (mib1) (Xenopus laevis (African clawed frog)).